The primary structure comprises 368 residues: E3 ubiquitin-protein ligase E3D (368 aa).

Position 2 is an N-acetylalanine (Ala2). Residues 129–159 (PLPSENWSALVGEWCCHPDPFANRPLHPREN) carry the BRAT1-like motif motif. Zn(2+) is bound at residue Cys144. The interaction with UBE2C stretch occupies residues 214–236 (RPSEGSFPNIPRSQFLQSIIAQC). Residues 332–368 (LPSATCLELLLILSRNNASLPLSLRQMNSFQVAFLKM) form an HECT-like region.

In terms of assembly, interacts with UBE2C/UbcH10 (E2 ubiquitin-conjugating enzyme). In vitro, interacts with cyclin-B. In terms of processing, ubiquitinated by UBCH10 (E2 ubiquitin-conjugating enzyme).

The protein resides in the cytoplasm. The enzyme catalyses S-ubiquitinyl-[E2 ubiquitin-conjugating enzyme]-L-cysteine + [acceptor protein]-L-lysine = [E2 ubiquitin-conjugating enzyme]-L-cysteine + N(6)-ubiquitinyl-[acceptor protein]-L-lysine.. Its pathway is protein modification; protein ubiquitination. Functionally, E3 ubiquitin-protein ligase which accepts ubiquitin from specific E2 ubiquitin-conjugating enzymes, and transfers it to substrates, generally promoting their degradation by the proteasome. Independently of its E3 ubiquitin-protein ligase activity, acts as an inhibitor of CPSF3 endonuclease activity by blocking CPSF3 active site. The chain is E3 ubiquitin-protein ligase E3D (Ube3d) from Mus musculus (Mouse).